We begin with the raw amino-acid sequence, 379 residues long: MPADDYPVTELTKALIARPSVTPLDEGCQTLMAERLSAIGFNIEPMVFEDTTNMWARRGNEGPVFCFAGHTDVVPTGDVSRWHTPPFVPTIIDGYLYGRGAADMKGSLAAMVIATECFVAKHPDHNGSIAFLITSDEEGPFINGTTRVIDTLEARNEKITWALVGEPSSTLKLGDVVKNGRRGSLTGNLTVKGIQGHVAYPHLADNPIHKAAPFLAELSQMHWDNGNEFFPPTSFQIANINGGTGASNVIPGALDVMFNFRYSTEVTADILIERVEALLKAHELDYDISWIFNGLPFLTGDGPLLDATRIAIRQVTGYETDPQTTGGTSDGRFIAPTGAKVLELGPVNATIHKVNECVKVDDLEQLALCYEVILEQLLC.

H70 is a Zn(2+) binding site. Residue D72 is part of the active site. D103 provides a ligand contact to Zn(2+). E137 serves as the catalytic Proton acceptor. Positions 138, 166, and 352 each coordinate Zn(2+).

This sequence belongs to the peptidase M20A family. DapE subfamily. Homodimer. Requires Zn(2+) as cofactor. Co(2+) serves as cofactor.

The enzyme catalyses N-succinyl-(2S,6S)-2,6-diaminopimelate + H2O = (2S,6S)-2,6-diaminopimelate + succinate. It participates in amino-acid biosynthesis; L-lysine biosynthesis via DAP pathway; LL-2,6-diaminopimelate from (S)-tetrahydrodipicolinate (succinylase route): step 3/3. Its function is as follows. Catalyzes the hydrolysis of N-succinyl-L,L-diaminopimelic acid (SDAP), forming succinate and LL-2,6-diaminopimelate (DAP), an intermediate involved in the bacterial biosynthesis of lysine and meso-diaminopimelic acid, an essential component of bacterial cell walls. In Shewanella baltica (strain OS155 / ATCC BAA-1091), this protein is Succinyl-diaminopimelate desuccinylase.